Here is a 195-residue protein sequence, read N- to C-terminus: dITP/XTP pyrophosphatase (195 aa).

A substrate-binding site is contributed by 8-13 (SGNAGK). 2 residues coordinate Mg(2+): Glu38 and Asp67. The active-site Proton acceptor is Asp67. Residues Ser68, 146–149 (FGYD), Lys169, and 174–175 (HR) contribute to the substrate site.

Belongs to the HAM1 NTPase family. In terms of assembly, homodimer. Requires Mg(2+) as cofactor.

The catalysed reaction is XTP + H2O = XMP + diphosphate + H(+). It carries out the reaction dITP + H2O = dIMP + diphosphate + H(+). It catalyses the reaction ITP + H2O = IMP + diphosphate + H(+). In terms of biological role, pyrophosphatase that catalyzes the hydrolysis of nucleoside triphosphates to their monophosphate derivatives, with a high preference for the non-canonical purine nucleotides XTP (xanthosine triphosphate), dITP (deoxyinosine triphosphate) and ITP. Seems to function as a house-cleaning enzyme that removes non-canonical purine nucleotides from the nucleotide pool, thus preventing their incorporation into DNA/RNA and avoiding chromosomal lesions. In Parasynechococcus marenigrum (strain WH8102), this protein is dITP/XTP pyrophosphatase.